Here is a 210-residue protein sequence, read N- to C-terminus: Thymidylate kinase (210 aa).

ATP is bound at residue 16–23 (GGDGVGKS).

It belongs to the thymidylate kinase family.

It catalyses the reaction dTMP + ATP = dTDP + ADP. Phosphorylation of dTMP to form dTDP in both de novo and salvage pathways of dTTP synthesis. This Leifsonia xyli subsp. xyli (strain CTCB07) protein is Thymidylate kinase.